Consider the following 175-residue polypeptide: Protein CENTRORADIALIS-like (175 aa).

The protein belongs to the phosphatidylethanolamine-binding protein family. As to expression, expressed in tissues surrounding vascular bundles in hypocotyl of 2-week-old plants.

The protein localises to the cytoplasm. Functionally, may form complexes with phosphorylated ligands by interfering with kinases and their effectors. Can substitute for TERMINAL FLOWER 1 (in vitro). The protein is Protein CENTRORADIALIS-like (CEN) of Arabidopsis thaliana (Mouse-ear cress).